A 381-amino-acid chain; its full sequence is Succinyl-diaminopimelate desuccinylase (381 aa).

Histidine 72 provides a ligand contact to Zn(2+). Aspartate 74 is a catalytic residue. A Zn(2+)-binding site is contributed by aspartate 105. Glutamate 139 acts as the Proton acceptor in catalysis. The Zn(2+) site is built by glutamate 140, glutamate 168, and histidine 354.

This sequence belongs to the peptidase M20A family. DapE subfamily. In terms of assembly, homodimer. It depends on Zn(2+) as a cofactor. Requires Co(2+) as cofactor.

The catalysed reaction is N-succinyl-(2S,6S)-2,6-diaminopimelate + H2O = (2S,6S)-2,6-diaminopimelate + succinate. It participates in amino-acid biosynthesis; L-lysine biosynthesis via DAP pathway; LL-2,6-diaminopimelate from (S)-tetrahydrodipicolinate (succinylase route): step 3/3. In terms of biological role, catalyzes the hydrolysis of N-succinyl-L,L-diaminopimelic acid (SDAP), forming succinate and LL-2,6-diaminopimelate (DAP), an intermediate involved in the bacterial biosynthesis of lysine and meso-diaminopimelic acid, an essential component of bacterial cell walls. This chain is Succinyl-diaminopimelate desuccinylase, found in Shewanella sp. (strain ANA-3).